The chain runs to 132 residues: Ubiquinol-cytochrome c reductase complex assembly factor 4 (132 aa).

The signal sequence occupies residues 1–15; the sequence is MNRVLCAPAAGAVRA. The Mitochondrial matrix portion of the chain corresponds to 16 to 78; sequence LRLIGRTSRS…GKGHQRPWWK (63 aa). Residues 24 to 73 are disordered; that stretch reads RSLHPLPGSRDRAHPAAEEQDDPDRPTEFSSSKANPRRWSVGHSMGKGHQ. Residues 32 to 50 show a composition bias toward basic and acidic residues; it reads SRDRAHPAAEEQDDPDRPT. The chain crosses the membrane as a helical span at residues 79 to 95; it reads VLPLSCFLVALIIWCYL. Over 96–132 the chain is Mitochondrial intermembrane; it reads REESEADQWLRQVWGEVPEPSDRSEEPETPAAYRART. Residues 110–132 form a disordered region; that stretch reads GEVPEPSDRSEEPETPAAYRART.

This sequence belongs to the UQCC4 family. Forms a complex, named COMB/coordinator of mitochondrial CYTB biogenesis, composed of UQCC1, UQCC2, UQCC4, UQCC5 and UQCC6; stabilizes nascent cytochrome b/MT-CYB and promotes its membrane insertion. Forms a complex, named COMA, composed of UQCC1, UQCC2 and UQCC4; activates MT-CYB translation. Forms a complex, named COMC, composed of UQCC1, UQCC2; UQCC3 and UQCC4; mediates MT-CYB hemylation and association with the first nuclear-encoded complex III subunit UQCRQ. Complexes COMA and COMB are bound to the mitochondrion inner membrane by UQCC4.

The protein localises to the mitochondrion inner membrane. Functionally, required for the assembly and stability of the mitochondrial ubiquinol-cytochrome c reductase complex (complex III (CIII) or cytochrome b-c1 complex), a multisubunit transmembrane complex that is part of the mitochondrial electron transport chain (ETC) which drives oxidative phosphorylation. This chain is Ubiquinol-cytochrome c reductase complex assembly factor 4 (UQCC4), found in Pongo abelii (Sumatran orangutan).